The primary structure comprises 395 residues: MTVPDTRKGLMIVNMGPHHPSMHGVLRLIVTLEGEDVIDCEPILGYLHRGMEKIAENRTIIQYLPYVTRWDYLATMFTEAITVNAPEQLGNVQVPQRASYIRVIMLELSRIASHLLWLGPFMADIGAQTPFFYIFRERELLYDLFEASTGMRMMHNYFRIGGVAADLPHGWIDKCLDFCDYFLTRVAEYEKLITRNPIFLDRVEGVGIIGGEEAINWGLSGPMLRASGIPWDLRKVDHYECYNEFDWEVQWQKEGDSLARYLVRIGEMTESIKIIQQAIEGIPGGPYENLEVRRFDFDGATNSEWNDLEYGFISKKPSPNFELSKQELYMRVEAPKGELGIYMIGDNSVFPWRWKIRPPGFINLQILPQLVKRMKLADIMTILGSIDIIMGEVDR.

Belongs to the complex I 49 kDa subunit family. As to quaternary structure, NDH is composed of at least 16 different subunits, 5 of which are encoded in the nucleus.

The protein resides in the plastid. Its subcellular location is the chloroplast thylakoid membrane. It catalyses the reaction a plastoquinone + NADH + (n+1) H(+)(in) = a plastoquinol + NAD(+) + n H(+)(out). It carries out the reaction a plastoquinone + NADPH + (n+1) H(+)(in) = a plastoquinol + NADP(+) + n H(+)(out). NDH shuttles electrons from NAD(P)H:plastoquinone, via FMN and iron-sulfur (Fe-S) centers, to quinones in the photosynthetic chain and possibly in a chloroplast respiratory chain. The immediate electron acceptor for the enzyme in this species is believed to be plastoquinone. Couples the redox reaction to proton translocation, and thus conserves the redox energy in a proton gradient. This is NAD(P)H-quinone oxidoreductase subunit H, chloroplastic from Dioscorea elephantipes (Elephant's foot yam).